A 473-amino-acid polypeptide reads, in one-letter code: UTP--glucose-1-phosphate uridylyltransferase (473 aa).

UTP-binding positions include 89–92 (LNGG), Lys103, Gln166, and Gly195. Residue 91–92 (GG) participates in substrate binding. Substrate-binding positions include His196 and 224 to 226 (NSD). 2 residues coordinate UTP: Asp226 and Lys364.

This sequence belongs to the UDPGP type 1 family.

It is found in the cytoplasm. The catalysed reaction is alpha-D-glucose 1-phosphate + UTP + H(+) = UDP-alpha-D-glucose + diphosphate. In terms of biological role, plays a central role as a glucosyl donor in cellular metabolic pathways. The polypeptide is UTP--glucose-1-phosphate uridylyltransferase (Hordeum vulgare (Barley)).